We begin with the raw amino-acid sequence, 274 residues long: Triosephosphate isomerase (274 aa).

31-33 (NWK) contributes to the substrate binding site. The active-site Electrophile is the H118. The active-site Proton acceptor is E188. Substrate is bound by residues G194, S234, and 255–256 (GG).

It belongs to the triosephosphate isomerase family. Homodimer.

The protein localises to the cytoplasm. The enzyme catalyses D-glyceraldehyde 3-phosphate = dihydroxyacetone phosphate. The protein operates within carbohydrate biosynthesis; gluconeogenesis. It functions in the pathway carbohydrate degradation; glycolysis; D-glyceraldehyde 3-phosphate from glycerone phosphate: step 1/1. Its function is as follows. Involved in the gluconeogenesis. Catalyzes stereospecifically the conversion of dihydroxyacetone phosphate (DHAP) to D-glyceraldehyde-3-phosphate (G3P). This chain is Triosephosphate isomerase, found in Chlamydia trachomatis serovar A (strain ATCC VR-571B / DSM 19440 / HAR-13).